Consider the following 284-residue polypeptide: 2-dehydro-3-deoxyphosphooctonate aldolase (284 aa).

It belongs to the KdsA family.

Its subcellular location is the cytoplasm. It carries out the reaction D-arabinose 5-phosphate + phosphoenolpyruvate + H2O = 3-deoxy-alpha-D-manno-2-octulosonate-8-phosphate + phosphate. It functions in the pathway carbohydrate biosynthesis; 3-deoxy-D-manno-octulosonate biosynthesis; 3-deoxy-D-manno-octulosonate from D-ribulose 5-phosphate: step 2/3. Its pathway is bacterial outer membrane biogenesis; lipopolysaccharide biosynthesis. The protein is 2-dehydro-3-deoxyphosphooctonate aldolase of Yersinia enterocolitica serotype O:8 / biotype 1B (strain NCTC 13174 / 8081).